The chain runs to 117 residues: Mitochondrial import inner membrane translocase subunit Tim10B (117 aa).

Residues 22 to 46 (CFSRCVDNLSQRDLGGHEDLCVDRC) carry the Twin CX3C motif motif. Disulfide bonds link cysteine 22/cysteine 46 and cysteine 26/cysteine 42. Residues 75-97 (EMEENARKAEQQQREQEKERLKE) show a composition bias toward basic and acidic residues. Residues 75–117 (EMEENARKAEQQQREQEKERLKEAAATAVLTPVQPPVAGNLSM) form a disordered region.

This sequence belongs to the small Tim family. In terms of assembly, component of the TIM22 complex, whose core is composed of Tim22, associated with peripheral protein Tim9b/Tim10b and the 70 kDa heterohexamer. In most cases, the 70 kDa complex is composed of TIMM9 and TIMM10.

It is found in the mitochondrion inner membrane. In terms of biological role, component of the TIM22 complex, a complex that mediates the import and insertion of multi-pass transmembrane proteins into the mitochondrial inner membrane. The TIM22 complex forms a twin-pore translocase that uses the membrane potential as the external driving force. In the TIM22 complex, it may act as a docking point for the soluble 70 kDa complex that guides the target proteins in transit through the aqueous mitochondrial intermembrane space. The protein is Mitochondrial import inner membrane translocase subunit Tim10B (Tim9b) of Drosophila melanogaster (Fruit fly).